A 180-amino-acid chain; its full sequence is Pyruvate synthase subunit PorC (180 aa).

Heterotetramer of one alpha, one beta, one delta and one gamma chain.

It catalyses the reaction 2 oxidized [2Fe-2S]-[ferredoxin] + pyruvate + CoA = 2 reduced [2Fe-2S]-[ferredoxin] + acetyl-CoA + CO2 + H(+). The protein is Pyruvate synthase subunit PorC (porC) of Methanothermobacter thermautotrophicus (strain ATCC 29096 / DSM 1053 / JCM 10044 / NBRC 100330 / Delta H) (Methanobacterium thermoautotrophicum).